Here is a 392-residue protein sequence, read N- to C-terminus: Homoserine O-acetyltransferase (392 aa).

Positions 52 to 356 constitute an AB hydrolase-1 domain; the sequence is NVVVVLHALT…ICGHDGFLVE (305 aa). The active-site Nucleophile is the Ser157. Arg227 contributes to the substrate binding site. Catalysis depends on residues Asp320 and His350. A substrate-binding site is contributed by Asp351. A disordered region spans residues 373–392; sequence SQSAGPGGAGPGSRKGTTRR.

It belongs to the AB hydrolase superfamily. MetX family. As to quaternary structure, homodimer.

It is found in the cytoplasm. It carries out the reaction L-homoserine + acetyl-CoA = O-acetyl-L-homoserine + CoA. It participates in amino-acid biosynthesis; L-methionine biosynthesis via de novo pathway; O-acetyl-L-homoserine from L-homoserine: step 1/1. Functionally, transfers an acetyl group from acetyl-CoA to L-homoserine, forming acetyl-L-homoserine. The protein is Homoserine O-acetyltransferase of Mycobacterium avium (strain 104).